The primary structure comprises 33 residues: Pardaxin P-1 (33 aa).

It belongs to the pardaxin family. In aqueous solution exists as a tetramer.

The protein localises to the secreted. It localises to the target cell membrane. Exhibits unusual shark repellent and surfactant properties. Forms voltage-dependent, ion-permeable channels in membranes. At high concentration causes cell membrane lysis. Causes death in killfish oryzias latipes in 30 minutes at a concentration of 25 micrograms/ml. The chain is Pardaxin P-1 from Pardachirus pavoninus (Peacock sole).